A 194-amino-acid polypeptide reads, in one-letter code: Probable thymidylate kinase (194 aa).

An ATP-binding site is contributed by 7–14 (GIDGSGKT).

It belongs to the thymidylate kinase family.

It carries out the reaction dTMP + ATP = dTDP + ADP. The chain is Probable thymidylate kinase (tmk) from Methanothermobacter thermautotrophicus (strain ATCC 29096 / DSM 1053 / JCM 10044 / NBRC 100330 / Delta H) (Methanobacterium thermoautotrophicum).